A 416-amino-acid polypeptide reads, in one-letter code: Tyrosine--tRNA ligase (416 aa).

Tyrosine 40 lines the L-tyrosine pocket. Residues 45–54 (ATAKSLHVGS) carry the 'HIGH' region motif. L-tyrosine is bound by residues tyrosine 177 and glutamine 181. The 'KMSKS' region signature appears at 237 to 241 (KMGKS). Lysine 240 serves as a coordination point for ATP. Positions 351–415 (ISIVQLIVKS…GKKRHAMVQL (65 aa)) constitute an S4 RNA-binding domain.

The protein belongs to the class-I aminoacyl-tRNA synthetase family. TyrS type 1 subfamily. As to quaternary structure, homodimer.

The protein resides in the cytoplasm. It catalyses the reaction tRNA(Tyr) + L-tyrosine + ATP = L-tyrosyl-tRNA(Tyr) + AMP + diphosphate + H(+). In terms of biological role, catalyzes the attachment of tyrosine to tRNA(Tyr) in a two-step reaction: tyrosine is first activated by ATP to form Tyr-AMP and then transferred to the acceptor end of tRNA(Tyr). This Roseobacter denitrificans (strain ATCC 33942 / OCh 114) (Erythrobacter sp. (strain OCh 114)) protein is Tyrosine--tRNA ligase.